We begin with the raw amino-acid sequence, 319 residues long: Ribonuclease Z (319 aa).

Zn(2+)-binding residues include His-62, His-64, Asp-66, His-67, His-145, Asp-215, and His-273. Asp-66 acts as the Proton acceptor in catalysis.

This sequence belongs to the RNase Z family. Homodimer. It depends on Zn(2+) as a cofactor.

The enzyme catalyses Endonucleolytic cleavage of RNA, removing extra 3' nucleotides from tRNA precursor, generating 3' termini of tRNAs. A 3'-hydroxy group is left at the tRNA terminus and a 5'-phosphoryl group is left at the trailer molecule.. Its function is as follows. Zinc phosphodiesterase, which displays some tRNA 3'-processing endonuclease activity. Probably involved in tRNA maturation, by removing a 3'-trailer from precursor tRNA. The protein is Ribonuclease Z of Borrelia duttonii (strain Ly).